The chain runs to 282 residues: Glycine betaine/carnitine transport permease protein GbuB (282 aa).

Transmembrane regions (helical) follow at residues 44–64 (VFDLVPPWLFIILLVFGTFWV), 70–90 (KWGLIIFEVVGLLLIWNLDFW), 99–119 (LVLTSSLIALVIGVPLGIWMA), 140–160 (AFVYLIPAVAFFGIGMVPGVV), 220–240 (IMLALSMVVIASMIGAMGLGT), and 251–271 (AGGGFVAGIAIVIVAIILDRL). The ABC transmembrane type-1 domain occupies 93–272 (MTQTLTLVLT…IVAIILDRLT (180 aa)).

This sequence belongs to the binding-protein-dependent transport system permease family. In terms of assembly, the complex is composed of two ATP-binding proteins (GbuA), two transmembrane proteins (GbuB) and a solute-binding protein (GbuC).

It is found in the cell membrane. Its activity is regulated as follows. The complex is activated by an osmotic gradient or by low temperature. Its function is as follows. Part of the ABC transporter complex GbuABC involved in glycine betaine uptake. Responsible for the translocation of the substrate across the membrane. Involved, with BetL and OpuC, in osmoprotection and cryoprotection of Listeria. Can also uptake carnitine when carnitine is abundant in the growth medium. This chain is Glycine betaine/carnitine transport permease protein GbuB (gbuB), found in Listeria monocytogenes serotype 1/2a (strain 10403S).